The chain runs to 425 residues: MMGKLPLGVVSPYVKMSSGGYTDPLKFYATSYCTAYGREDFKPRVGSHVGTGYKSNFQPVVSCQASLEALDNPARGEQAQDHFQSVASQSYRPLEVPDGKHPLPWSMRQTSSGYGREKPSAGPPTKEVRKVHFDTQEHGPQAITGLEPREVPLLHQQQGQDPLERENFRHGPRFMTSEYNSKYLRDPLDQPDFLQKKSIGAKEGSGFTKQSHQSPIVFQPPSQALPGDPALLPGQSVTKSDFLPKTHLHGDEFLPVLARGSKRETAFSRGNERILNPRVPPPCPEPSSVSHQQFQPLHRMQQTNVALLGRETVGKKEPTGFSLNNPMYVRSPCDPDRDQRYLTTYNQGYFENIPKGLDQEGWTRGGIQPQMPGGYALSQPVSCMEATPNPMESLRHLHPHVGRTLTSADPFYQNTPHSSRCVAHS.

Disordered regions lie at residues 93-126 (PLEVPDGKHPLPWSMRQTSSGYGREKPSAGPPTK), 203-225 (EGSGFTKQSHQSPIVFQPPSQAL), and 316-335 (KEPTGFSLNNPMYVRSPCDP). A compositionally biased stretch (polar residues) spans 207-222 (FTKQSHQSPIVFQPPS).

Microtubule inner protein component of sperm flagellar doublet microtubules. Interacts with PPP1CA.

It localises to the cell projection. The protein localises to the cilium. It is found in the cytoplasm. Its subcellular location is the cytoskeleton. The protein resides in the flagellum axoneme. This Homo sapiens (Human) protein is Stabilizer of axonemal microtubules 4.